The primary structure comprises 128 residues: Large ribosomal subunit protein bL20 (128 aa).

The protein belongs to the bacterial ribosomal protein bL20 family.

Functionally, binds directly to 23S ribosomal RNA and is necessary for the in vitro assembly process of the 50S ribosomal subunit. It is not involved in the protein synthesizing functions of that subunit. This is Large ribosomal subunit protein bL20 from Corynebacterium efficiens (strain DSM 44549 / YS-314 / AJ 12310 / JCM 11189 / NBRC 100395).